A 349-amino-acid chain; its full sequence is Isopentenyl-diphosphate delta-isomerase (349 aa).

9-10 (RK) contributes to the substrate binding site. Residues 65–67 (AMT), Ser-95, and Asn-124 each bind FMN. 95–97 (STH) lines the substrate pocket. Gln-154 is a substrate binding site. Glu-155 is a Mg(2+) binding site. FMN-binding positions include Lys-186, Ser-211, Thr-216, 262–264 (GLR), and 283–284 (SR).

The protein belongs to the IPP isomerase type 2 family. In terms of assembly, homooctamer. Dimer of tetramers. FMN is required as a cofactor. It depends on NADPH as a cofactor. Requires Mg(2+) as cofactor.

It is found in the cytoplasm. It catalyses the reaction isopentenyl diphosphate = dimethylallyl diphosphate. Involved in the biosynthesis of isoprenoids. Catalyzes the 1,3-allylic rearrangement of the homoallylic substrate isopentenyl (IPP) to its allylic isomer, dimethylallyl diphosphate (DMAPP). This is Isopentenyl-diphosphate delta-isomerase from Staphylococcus aureus (strain N315).